A 208-amino-acid polypeptide reads, in one-letter code: ATP phosphoribosyltransferase (208 aa).

The protein belongs to the ATP phosphoribosyltransferase family. Short subfamily. Heteromultimer composed of HisG and HisZ subunits.

It localises to the cytoplasm. It carries out the reaction 1-(5-phospho-beta-D-ribosyl)-ATP + diphosphate = 5-phospho-alpha-D-ribose 1-diphosphate + ATP. It functions in the pathway amino-acid biosynthesis; L-histidine biosynthesis; L-histidine from 5-phospho-alpha-D-ribose 1-diphosphate: step 1/9. Its function is as follows. Catalyzes the condensation of ATP and 5-phosphoribose 1-diphosphate to form N'-(5'-phosphoribosyl)-ATP (PR-ATP). Has a crucial role in the pathway because the rate of histidine biosynthesis seems to be controlled primarily by regulation of HisG enzymatic activity. This is ATP phosphoribosyltransferase from Hydrogenovibrio crunogenus (strain DSM 25203 / XCL-2) (Thiomicrospira crunogena).